The chain runs to 171 residues: Ribosome maturation factor RimP (171 aa).

Belongs to the RimP family.

The protein resides in the cytoplasm. Its function is as follows. Required for maturation of 30S ribosomal subunits. The chain is Ribosome maturation factor RimP from Oleidesulfovibrio alaskensis (strain ATCC BAA-1058 / DSM 17464 / G20) (Desulfovibrio alaskensis).